Consider the following 58-residue polypeptide: UPF0391 membrane protein Sfri_4000 (58 aa).

The next 2 helical transmembrane spans lie at 6–26 (LMFL…IAGA) and 27–47 (AAGI…ISLV).

This sequence belongs to the UPF0391 family.

It is found in the cell membrane. This chain is UPF0391 membrane protein Sfri_4000, found in Shewanella frigidimarina (strain NCIMB 400).